We begin with the raw amino-acid sequence, 516 residues long: Cytochrome P450 1A2 (516 aa).

Ser69 carries O-linked (GlcNAc) serine glycosylation. Phe226 contacts substrate. Residue Cys458 coordinates heme.

This sequence belongs to the cytochrome P450 family. Interacts with PGRMC1; the interaction requires PGRMC1 homodimerization. Heme is required as a cofactor.

It localises to the endoplasmic reticulum membrane. Its subcellular location is the microsome membrane. The enzyme catalyses an organic molecule + reduced [NADPH--hemoprotein reductase] + O2 = an alcohol + oxidized [NADPH--hemoprotein reductase] + H2O + H(+). It carries out the reaction 17beta-estradiol + reduced [NADPH--hemoprotein reductase] + O2 = 2-hydroxy-17beta-estradiol + oxidized [NADPH--hemoprotein reductase] + H2O + H(+). The catalysed reaction is 17beta-estradiol + reduced [NADPH--hemoprotein reductase] + O2 = 4-hydroxy-17beta-estradiol + oxidized [NADPH--hemoprotein reductase] + H2O + H(+). It catalyses the reaction estrone + reduced [NADPH--hemoprotein reductase] + O2 = 2-hydroxyestrone + oxidized [NADPH--hemoprotein reductase] + H2O + H(+). The enzyme catalyses estrone + reduced [NADPH--hemoprotein reductase] + O2 = 4-hydroxyestrone + oxidized [NADPH--hemoprotein reductase] + H2O + H(+). It carries out the reaction cholesterol + reduced [NADPH--hemoprotein reductase] + O2 = 25-hydroxycholesterol + oxidized [NADPH--hemoprotein reductase] + H2O + H(+). The catalysed reaction is all-trans-retinol + reduced [NADPH--hemoprotein reductase] + O2 = all-trans-retinal + oxidized [NADPH--hemoprotein reductase] + 2 H2O + H(+). It catalyses the reaction all-trans-retinal + reduced [NADPH--hemoprotein reductase] + O2 = all-trans-retinoate + oxidized [NADPH--hemoprotein reductase] + H2O + 2 H(+). The enzyme catalyses (5Z,8Z,11Z,14Z)-eicosatetraenoate + reduced [NADPH--hemoprotein reductase] + O2 = (14R,15S)-epoxy-(5Z,8Z,11Z)-eicosatrienoate + oxidized [NADPH--hemoprotein reductase] + H2O + H(+). It carries out the reaction (5Z,8Z,11Z,14Z)-eicosatetraenoate + reduced [NADPH--hemoprotein reductase] + O2 = (14S,15R)-epoxy-(5Z,8Z,11Z)-eicosatrienoate + oxidized [NADPH--hemoprotein reductase] + H2O + H(+). The catalysed reaction is (5Z,8Z,11Z,14Z,17Z)-eicosapentaenoate + reduced [NADPH--hemoprotein reductase] + O2 = (17R,18S)-epoxy-(5Z,8Z,11Z,14Z)-eicosatetraenoate + oxidized [NADPH--hemoprotein reductase] + H2O + H(+). It catalyses the reaction (4Z,7Z,10Z,13Z,16Z,19Z)-docosahexaenoate + reduced [NADPH--hemoprotein reductase] + O2 = (19R,20S)-epoxy-(4Z,7Z,10Z,13Z,16Z)-docosapentaenoate + oxidized [NADPH--hemoprotein reductase] + H2O + H(+). The enzyme catalyses (5S)-hydroperoxy-(6E,8Z,11Z,14Z)-eicosatetraenoate = 5-oxo-(6E,8Z,11Z,14Z)-eicosatetraenoate + H2O. It carries out the reaction (12S)-hydroperoxy-(5Z,8Z,10E,14Z)-eicosatetraenoate = 12-oxo-(5Z,8Z,10E,14Z)-eicosatetraenoate + H2O. The catalysed reaction is (15S)-hydroperoxy-(5Z,8Z,11Z,13E)-eicosatetraenoate = 15-oxo-(5Z,8Z,11Z,13E)-eicosatetraenoate + H2O. It catalyses the reaction (13S)-hydroperoxy-(9Z,11E)-octadecadienoate = 13-oxo-(9Z,11E)-octadecadienoate + H2O. The enzyme catalyses (5Z,8Z,11Z,14Z)-eicosatetraenoate + reduced [NADPH--hemoprotein reductase] + O2 = 13-hydroxy-(5Z,8Z,11Z,14Z)-eicosatetraenoate + oxidized [NADPH--hemoprotein reductase] + H2O + H(+). It carries out the reaction (5Z,8Z,11Z,14Z)-eicosatetraenoate + reduced [NADPH--hemoprotein reductase] + O2 = 19-hydroxy-(5Z,8Z,11Z,14Z)-eicosatetraenoate + oxidized [NADPH--hemoprotein reductase] + H2O + H(+). The catalysed reaction is (9Z,12Z)-octadecadienoate + reduced [NADPH--hemoprotein reductase] + O2 = 11-hydroxy-(9Z,12Z)-octadecadienoate + oxidized [NADPH--hemoprotein reductase] + H2O + H(+). It participates in cofactor metabolism; retinol metabolism. The protein operates within steroid metabolism; cholesterol metabolism. Its pathway is lipid metabolism; arachidonate metabolism. Functionally, a cytochrome P450 monooxygenase involved in the metabolism of various endogenous substrates, including fatty acids, steroid hormones and vitamins. Mechanistically, uses molecular oxygen inserting one oxygen atom into a substrate, and reducing the second into a water molecule, with two electrons provided by NADPH via cytochrome P450 reductase (NADPH--hemoprotein reductase). Catalyzes the hydroxylation of carbon-hydrogen bonds. Exhibits high catalytic activity for the formation of hydroxyestrogens from estrone (E1) and 17beta-estradiol (E2), namely 2-hydroxy E1 and E2. Metabolizes cholesterol toward 25-hydroxycholesterol, a physiological regulator of cellular cholesterol homeostasis. May act as a major enzyme for all-trans retinoic acid biosynthesis in the liver. Catalyzes two successive oxidative transformation of all-trans retinol to all-trans retinal and then to the active form all-trans retinoic acid. Primarily catalyzes stereoselective epoxidation of the last double bond of polyunsaturated fatty acids (PUFA), displaying a strong preference for the (R,S) stereoisomer. Catalyzes bisallylic hydroxylation and omega-1 hydroxylation of PUFA. May also participate in eicosanoids metabolism by converting hydroperoxide species into oxo metabolites (lipoxygenase-like reaction, NADPH-independent). Plays a role in the oxidative metabolism of xenobiotics. Catalyzes the N-hydroxylation of heterocyclic amines and the O-deethylation of phenacetin. Metabolizes caffeine via N3-demethylation. This Balaenoptera acutorostrata (Common minke whale) protein is Cytochrome P450 1A2 (CYP1A2).